A 280-amino-acid chain; its full sequence is UPF0276 protein CC_3255 (280 aa).

Belongs to the UPF0276 family.

In Caulobacter vibrioides (strain ATCC 19089 / CIP 103742 / CB 15) (Caulobacter crescentus), this protein is UPF0276 protein CC_3255.